Consider the following 320-residue polypeptide: Nicotianamine synthase 1 (320 aa).

The protein belongs to the nicotianamine synthase (NAS)-like family. As to expression, in shoots and roots.

The enzyme catalyses 3 S-adenosyl-L-methionine = nicotianamine + 3 S-methyl-5'-thioadenosine + 3 H(+). Functionally, synthesizes nicotianamine, a polyamine which serves as a sensor for the physiological iron status within the plant, and/or might be involved in the transport of iron. The sequence is that of Nicotianamine synthase 1 (NAS1) from Arabidopsis thaliana (Mouse-ear cress).